Here is a 637-residue protein sequence, read N- to C-terminus: Phosphomethylpyrimidine synthase (637 aa).

Substrate-binding positions include asparagine 242, methionine 271, tyrosine 300, histidine 336, 356-358, 397-400, and glutamate 436; these read SRG and DGLR. Position 440 (histidine 440) interacts with Zn(2+). Residue tyrosine 463 participates in substrate binding. Zn(2+) is bound at residue histidine 504. [4Fe-4S] cluster-binding residues include cysteine 584, cysteine 587, and cysteine 592.

This sequence belongs to the ThiC family. Homodimer. The cofactor is [4Fe-4S] cluster.

The enzyme catalyses 5-amino-1-(5-phospho-beta-D-ribosyl)imidazole + S-adenosyl-L-methionine = 4-amino-2-methyl-5-(phosphooxymethyl)pyrimidine + CO + 5'-deoxyadenosine + formate + L-methionine + 3 H(+). It functions in the pathway cofactor biosynthesis; thiamine diphosphate biosynthesis. In terms of biological role, catalyzes the synthesis of the hydroxymethylpyrimidine phosphate (HMP-P) moiety of thiamine from aminoimidazole ribotide (AIR) in a radical S-adenosyl-L-methionine (SAM)-dependent reaction. The sequence is that of Phosphomethylpyrimidine synthase from Janthinobacterium sp. (strain Marseille) (Minibacterium massiliensis).